The following is a 505-amino-acid chain: MSRSYNDELQFLEKINKNCWRIRKGFVPNMQVEGVFYVNDALEKLMFEELRNACRGGGVGGFLPAMKQIGNVAALPGIVHRSIGLPDVHSGYGFAIGNMAAFDMNDPEAVVSPGGVGFDINCGVRLLRTNLDESDVQPVKEQLAQAMFDHIPVGVGSKGVIPMNAKDLEEALEMGVDWSLREGYAWAEDKEHCEEYGRMLQADPNKVSARAKKRGLPQLGTLGAGNHYAEIQVVDEIFNEYAAKKMGIDHKGQVCVMIHSGSRGLGHQVATDALVAMEKAMKRDKIIVNDRQLACARIASPEGQDYLKGMAAAGNYAWVNRSSMTFLTRQAFAKVFNTTPDDLDLHVIYDVSHNIAKVEQHVVDGKERTLLVHRKGSTRAFPPHHPLIAVDYQLTGQPVLIGGTMGTCSYVLTGTEQGMTETFGTTCHGAGRALSRAKSRRNLDFQDVLDKLADMGIAIRVASPKLVMEEAPESYKNVTDVVNTCHDAGISKKAIKLRPIAVIKG.

4 residues coordinate Mn(2+): aspartate 119, cysteine 122, histidine 227, and histidine 259. Asparagine 226–glutamate 230 contacts GMP. Residue serine 300 is modified to Phosphoserine. Histidine 353 is a Mn(2+) binding site. GMP contacts are provided by residues histidine 353–asparagine 354, glycine 402–methionine 405, serine 409, and histidine 428–glycine 431. The active-site GMP-histidine intermediate is histidine 428. Lysine 496 is covalently cross-linked (Glycyl lysine isopeptide (Lys-Gly) (interchain with G-Cter in SUMO2)). Lysine 504 contributes to the GMP binding site.

Belongs to the RtcB family. As to quaternary structure, catalytic component of the tRNA-splicing ligase complex. Mn(2+) is required as a cofactor.

The protein resides in the nucleus. It localises to the cytoplasm. The enzyme catalyses a 3'-end 3'-phospho-ribonucleotide-RNA + a 5'-end dephospho-ribonucleoside-RNA + GTP = a ribonucleotidyl-ribonucleotide-RNA + GMP + diphosphate. The catalysed reaction is a 3'-end 2',3'-cyclophospho-ribonucleotide-RNA + a 5'-end dephospho-ribonucleoside-RNA + GTP + H2O = a ribonucleotidyl-ribonucleotide-RNA + GMP + diphosphate + H(+). In terms of biological role, catalytic subunit of the tRNA-splicing ligase complex that acts by directly joining spliced tRNA halves to mature-sized tRNAs by incorporating the precursor-derived splice junction phosphate into the mature tRNA as a canonical 3',5'-phosphodiester. May act as an RNA ligase with broad substrate specificity, and may function toward other RNAs. This is RNA-splicing ligase RtcB homolog from Sus scrofa (Pig).